A 393-amino-acid polypeptide reads, in one-letter code: Nucleosome assembly protein 1-like 1-B (393 aa).

The span at 1–10 (MANIDNKEQT) shows a compositional bias: basic and acidic residues. The interval 1–38 (MANIDNKEQTELDQQDMEDVEDVEEEETGEEANSKARQ) is disordered. The segment covering 11–30 (ELDQQDMEDVEDVEEEETGE) has biased composition (acidic residues). Residues 126 to 151 (YEPTEEECEWKVDEEEDIAEDLKEKA) carry the NAP1L motif motif. The Nuclear localization signal motif lies at 274-280 (IKKKQKH). The span at 347–377 (AIEDDDDDYDEEGEEADDEEGEEEADEDHDP) shows a compositional bias: acidic residues. The interval 347-393 (AIEDDDDDYDEEGEEADDEEGEEEADEDHDPDFDPKKAQNPAECKQQ) is disordered.

The protein belongs to the nucleosome assembly protein (NAP) family. Forms homomultimers. Interacts with histone b4. Interacts with the B-type cyclins ccnb1 and ccnb2. Phosphorylated by cyclin B-cdc2 kinase complexes.

It localises to the cytoplasm. It is found in the nucleus. In terms of biological role, acts as a chaperone for the linker histone to facilitate deposition of histone B4 onto linker DNA. Required for both remodeling of sperm chromatin into nucleosomes, and linker histone binding to nucleosome core dimers. Plays a role in tissue-specific gene regulation. Required for primitive hemopoiesis, acting upstream of tal1/scl. This Xenopus laevis (African clawed frog) protein is Nucleosome assembly protein 1-like 1-B (nap1l1-b).